The sequence spans 790 residues: Probable E3 ubiquitin-protein ligase MARCHF10 (790 aa).

Residues 33-240 form a disordered region; sequence LKRQEHKKEP…PQNEPHTALS (208 aa). A compositionally biased stretch (basic and acidic residues) spans 34-48; sequence KRQEHKKEPNEKKQE. Low complexity predominate over residues 61–70; that stretch reads FSSGSSCKQS. Ser78 bears the Phosphoserine mark. Over residues 218–227 the composition is skewed to basic and acidic residues; the sequence is PLERQKKGDP. Polar residues predominate over residues 230–240; sequence RPQNEPHTALS. Residues 284–308 are a coiled coil; it reads LSLNNEQENYDTEEETRTEEELLLA. Disordered regions lie at residues 323–416 and 507–569; these read GTSA…EDVS and LSPI…RHLQ. Polar residues-rich tracts occupy residues 355 to 370, 406 to 416, and 511 to 520; these read RKTS…SSPG, GVTQVSAEDVS, and RNRNPSAASE. A compositionally biased stretch (basic and acidic residues) spans 521–533; the sequence is SHSEDTQGEEERA. The segment covering 534–563 has biased composition (polar residues); the sequence is STSQAQESPLLSDLPNPQSSMALGDSPSSP. Residues 633 to 703 form an RING-CH-type zinc finger; sequence DSEEEGDLCR…EMCKQGLLVD (71 aa). Zn(2+) contacts are provided by Cys641, Cys644, Cys659, Cys661, His669, Cys672, Cys693, and Cys696. The tract at residues 757–790 is disordered; the sequence is ERMSRNYPQPRPEESESSESGDGNESNVYPGRVI. Residues 774–783 show a composition bias toward low complexity; sequence SESGDGNESN.

It catalyses the reaction S-ubiquitinyl-[E2 ubiquitin-conjugating enzyme]-L-cysteine + [acceptor protein]-L-lysine = [E2 ubiquitin-conjugating enzyme]-L-cysteine + N(6)-ubiquitinyl-[acceptor protein]-L-lysine.. It participates in protein modification; protein ubiquitination. In terms of biological role, E3 ubiquitin-protein ligase. E3 ubiquitin ligases accept ubiquitin from an E2 ubiquitin-conjugating enzyme in the form of a thioester and then directly transfer the ubiquitin to targeted substrates. The chain is Probable E3 ubiquitin-protein ligase MARCHF10 (Marchf10) from Rattus norvegicus (Rat).